The following is a 110-amino-acid chain: Large ribosomal subunit protein uL22 (110 aa).

Belongs to the universal ribosomal protein uL22 family. Part of the 50S ribosomal subunit.

This protein binds specifically to 23S rRNA; its binding is stimulated by other ribosomal proteins, e.g. L4, L17, and L20. It is important during the early stages of 50S assembly. It makes multiple contacts with different domains of the 23S rRNA in the assembled 50S subunit and ribosome. In terms of biological role, the globular domain of the protein is located near the polypeptide exit tunnel on the outside of the subunit, while an extended beta-hairpin is found that lines the wall of the exit tunnel in the center of the 70S ribosome. This chain is Large ribosomal subunit protein uL22, found in Leptospira interrogans serogroup Icterohaemorrhagiae serovar copenhageni (strain Fiocruz L1-130).